The sequence spans 309 residues: Elongation factor Ts (309 aa).

An involved in Mg(2+) ion dislocation from EF-Tu region spans residues 82 to 85; the sequence is TDFV.

This sequence belongs to the EF-Ts family.

It localises to the cytoplasm. Functionally, associates with the EF-Tu.GDP complex and induces the exchange of GDP to GTP. It remains bound to the aminoacyl-tRNA.EF-Tu.GTP complex up to the GTP hydrolysis stage on the ribosome. This is Elongation factor Ts from Rickettsia massiliae (strain Mtu5).